A 479-amino-acid polypeptide reads, in one-letter code: Ribosomal lysine N-methyltransferase 2 (479 aa).

The 304-residue stretch at 22–325 (PNISICESPE…INEELFLNYG (304 aa)) folds into the SET domain. Tyr324 provides a ligand contact to S-adenosyl-L-methionine.

Belongs to the class V-like SAM-binding methyltransferase superfamily. RKM2 family.

S-adenosyl-L-methionine-dependent protein-lysine N-methyltransferase that trimethylates 60S ribosomal protein L12 (RPL12A and RPL12B) at 'Lys-4' and 'Lys-11'. This Saccharomyces cerevisiae (strain ATCC 204508 / S288c) (Baker's yeast) protein is Ribosomal lysine N-methyltransferase 2.